The primary structure comprises 655 residues: tRNA uridine 5-carboxymethylaminomethyl modification enzyme MnmG (655 aa).

13-18 (GGGHAG) contacts FAD. 281-295 (GPRYCPSVEDKINRF) is a binding site for NAD(+).

It belongs to the MnmG family. As to quaternary structure, homodimer. Heterotetramer of two MnmE and two MnmG subunits. FAD is required as a cofactor.

It is found in the cytoplasm. Its function is as follows. NAD-binding protein involved in the addition of a carboxymethylaminomethyl (cmnm) group at the wobble position (U34) of certain tRNAs, forming tRNA-cmnm(5)s(2)U34. The chain is tRNA uridine 5-carboxymethylaminomethyl modification enzyme MnmG from Paracidovorax citrulli (strain AAC00-1) (Acidovorax citrulli).